We begin with the raw amino-acid sequence, 585 residues long: SCF E3 ubiquitin ligase complex F-box protein grrA (585 aa).

The segment covering 1-10 has biased composition (polar residues); it reads MARSRQPTRF. 2 disordered regions span residues 1-34 and 41-60; these read MARS…DTDF and DSQS…QNDP. Over residues 11-25 the composition is skewed to low complexity; it reads SSEAPSESSSSTSPE. The F-box domain maps to 65 to 113; the sequence is PPIAYLPPEILISIFSKLSSPRDLLSCLLVCRIWALNCVGLLWHRPSCN. LRR repeat units follow at residues 147–171, 172–197, 198–223, 224–249, 250–275, 276–301, 302–329, 330–355, 356–381, 382–407, 408–432, 433–465, and 466–491; these read TEDV…TLTN, CRKL…DVSE, LRSL…NITG, CVKV…KLNG, VSQV…DLQE, CKLV…RLAH, CTEI…DLTA, CENI…VLAK, CKFI…HLGH, CSNI…DLAC, CSRL…GLVK, CQLI…HLSY, and CVNL…SLTG.

Part of a SCF E3 ubiquitin ligase complex. In terms of tissue distribution, specifically expressed in ascus mother cells.

It localises to the cytoplasm. Its function is as follows. Involved in meiosis and required for ascospore formation. Involved in substrate recognition in ubiquitin-dependent degradation. The chain is SCF E3 ubiquitin ligase complex F-box protein grrA (grrA) from Emericella nidulans (strain FGSC A4 / ATCC 38163 / CBS 112.46 / NRRL 194 / M139) (Aspergillus nidulans).